The chain runs to 116 residues: Spermadhesin Z13 (116 aa).

2 disulfide bridges follow: Cys14-Cys35 and Cys58-Cys79. A CUB domain is found at 14–115 (CGDLYGEEYG…PDFFLIFRRV (102 aa)).

It belongs to the spermadhesin family. In terms of assembly, homodimer; disulfide-linked. Seminal plasma.

Its subcellular location is the secreted. In terms of biological role, may be involved in the fertilization process. The polypeptide is Spermadhesin Z13 (Bos taurus (Bovine)).